Consider the following 169-residue polypeptide: Lipoprotein signal peptidase (169 aa).

4 consecutive transmembrane segments (helical) span residues 10-30 (LPWLWITVLVFVLDQLSKAFF), 40-60 (IVVIPDLFSWTLAYNTGAAFS), 68-88 (WQRWLFALIAIVVSAILVVWL), and 94-114 (GETWLAIALALVLGGALGNLY). Catalysis depends on residues aspartate 124 and aspartate 143. Residues 135–155 (YFPAFNLADSAITVGAVMLAL) form a helical membrane-spanning segment.

Belongs to the peptidase A8 family.

The protein resides in the cell inner membrane. The catalysed reaction is Release of signal peptides from bacterial membrane prolipoproteins. Hydrolyzes -Xaa-Yaa-Zaa-|-(S,diacylglyceryl)Cys-, in which Xaa is hydrophobic (preferably Leu), and Yaa (Ala or Ser) and Zaa (Gly or Ala) have small, neutral side chains.. Its pathway is protein modification; lipoprotein biosynthesis (signal peptide cleavage). Functionally, this protein specifically catalyzes the removal of signal peptides from prolipoproteins. In Pseudomonas aeruginosa (strain UCBPP-PA14), this protein is Lipoprotein signal peptidase.